The primary structure comprises 64 residues: Long neurotoxin MS4 (64 aa).

Intrachain disulfides connect Cys3–Cys24, Cys6–Cys11, Cys17–Cys41, Cys45–Cys57, and Cys58–Cys63.

It belongs to the three-finger toxin family. Ancestral subfamily. In terms of tissue distribution, expressed by the venom gland.

The protein resides in the secreted. Its function is as follows. Produces peripheral paralysis by blocking neuromuscular transmission at the postsynaptic site. Weak inhibitor of the endogenous nicotinic acetylcholine receptors (nAChR) in the human rhabdomyosarcoma TE 671 cell line with an IC(50) of 690 mM. This neurotoxin is lethal to zebrafish by injection at the back of the dorsolateral region, but is not toxic to mice by intraperitoneal injection. This chain is Long neurotoxin MS4, found in Micrurus surinamensis (Surinam coral snake).